Reading from the N-terminus, the 2647-residue chain is Filamin-A (2647 aa).

The segment at 1–37 (MSSSHSRCGQSAAVASPGGSIDSRDAEMPATEKDLAE) is disordered. Residue Ser2 is modified to N-acetylserine. The tract at residues 2-274 (SSSHSRCGQS…PKAKLKPGAP (273 aa)) is actin-binding. A phosphoserine mark is found at Ser11, Ser16, and Ser20. Residues 22–37 (DSRDAEMPATEKDLAE) are compositionally biased toward basic and acidic residues. Residues Lys42, Lys43, and Lys135 each participate in a glycyl lysine isopeptide (Lys-Gly) (interchain with G-Cter in ubiquitin) cross-link. Calponin-homology (CH) domains lie at 43-149 (KIQQ…LHYS) and 166-269 (QTPK…KAKL). The segment at 271 to 294 (PGAPLRPKLNPKKARAYGPGIEPT) is disordered. Filamin repeat units follow at residues 276–374 (RPKL…EVYV), 376–474 (KSQG…TVTV), 475–570 (GQAC…EVKV), 571–663 (GTEC…MADI), 667–763 (PQDF…RVNV), 764–866 (GAGS…RVKV), 867–965 (EPSH…SVGV), 966–1061 (SPSL…PLEA), 1062–1154 (VAPT…KAHV), 1155–1249 (APCF…KLQV), 1250–1349 (EPAV…QVPV), 1350–1442 (TEGC…KVPV), 1443–1539 (HDVT…KVKV), 1540–1636 (LPTH…RVRA), and 1641–1740 (DASK…QVTA). A Glycyl lysine isopeptide (Lys-Gly) (interchain with G-Cter in SUMO1); alternate cross-link involves residue Lys299. Lys299 participates in a covalent cross-link: Glycyl lysine isopeptide (Lys-Gly) (interchain with G-Cter in SUMO2); alternate. N6-acetyllysine is present on residues Lys376 and Lys508. 5 positions are modified to N6-acetyllysine: Lys700, Lys781, Lys837, Lys865, and Lys906. A phosphoserine mark is found at Ser968 and Ser1055. Lys1071 is subject to N6-acetyllysine; alternate. An N6-succinyllysine; alternate modification is found at Lys1071. Position 1084 is a phosphoserine (Ser1084). The residue at position 1089 (Thr1089) is a Phosphothreonine. Phosphoserine occurs at positions 1301 and 1338. Lys1372 carries the post-translational modification N6-acetyllysine. Ser1459 and Ser1533 each carry phosphoserine. Residues 1490–1607 (PKGLVEPVDV…DNHDGTYTVA (118 aa)) form an interaction with furin region. Residue Lys1538 is modified to N6-acetyllysine. Phosphoserine is present on residues Ser1630 and Ser1734. The interval 1741–1778 (LAGDQPTVQTPLRSQQLAPQYNYPQGSQQTWIPERPMV) is hinge 1. Phosphothreonine is present on Thr1750. Filamin repeat units follow at residues 1765 to 1860 (QGSQ…QFYV), 1861 to 1952 (DYVN…TARV), 1953 to 2039 (TGDD…PVVI), 2042 to 2134 (SEIG…SVKV), 2135 to 2230 (TGEG…QFTV), 2233 to 2325 (LGEG…VVPV), 2327 to 2420 (SPSG…KIRV), and 2424 to 2516 (GHGG…KAKV). A Phosphoserine modification is found at Ser1835. Residues Ser1967, Ser2053, Ser2128, Ser2152, Ser2158, Ser2163, Ser2180, Ser2284, Ser2327, and Ser2329 each carry the phosphoserine modification. Thr2336 carries the post-translational modification Phosphothreonine. Phosphoserine occurs at positions 2338, 2370, 2414, 2510, 2523, and 2526. Positions 2517–2553 (TGPRLVSNHSLHETSSVFVDSLTKVATVPQHATSGPG) are hinge 2. The interval 2517–2647 (TGPRLVSNHS…PGSPYRIMVP (131 aa)) is self-association site, tail. The Filamin 24 repeat unit spans residues 2552–2646 (PGPADVSKVV…IPGSPYRIMV (95 aa)). Residue Lys2569 is modified to N6-acetyllysine; alternate. The residue at position 2569 (Lys2569) is an N6-succinyllysine; alternate. The residue at position 2575 (Lys2575) is an N6-acetyllysine. Phosphothreonine is present on Thr2599. N6-acetyllysine is present on residues Lys2607 and Lys2621.

The protein belongs to the filamin family. Homodimer. Interacts with FCGR1A, FLNB, FURIN, HSPB7, KCND2, INPPL1, MYOT, MYOZ1, PDLIM2, ARHGAP24, PSEN1, PSEN2 and ECSCR. Also interacts with various other binding partners in addition to filamentous actin. Interacts (via N-terminus) with TAF1B. Interacts (via N-terminus) with MIS18BP1 (via N-terminus). Interacts with TMEM67 (via C-terminus) and MKS1. Interacts (via actin-binding domain) with MICALL2 (via calponin-homology (CH) domain). Interacts with RFLNA and RFLNB. Interacts (via filamin repeat 5) with SYK; docks SYK to the plasma membrane. Interacts (via filamin repeats 19 and 21) with DRD3; increased PKA-mediated phosphorylation at Ser-2152. Interacts (via filamin repeat 21) with MAS1, AGTR1 and ADRA1D; increases PKA-mediated phosphorylation of FLNA at Ser-2152. Interacts (via filamin repeats 4, 9, 12, 17, 19, 21, and 23) with GP1BA (high affinity), ITGB7, ITGB2 and FBLIM1. Interacts with CEACAM1 (via cytoplasmic domain); inhibits cell migration and cell scattering by interfering with the interaction between FLNA and RALA. Interacts with FOXC1. Interacts (via calponin-homology (CH) domain 1 and filamin repeat 24) with CRMP1; the interaction alters FLNA ternary structure and thus promotes FLNA dissociation from F-actin. Interacts with DPYSL3/CRMP3 and DPYSL4/CRMP4. In terms of processing, phosphorylation at Ser-2152 is negatively regulated by the autoinhibited conformation of filamin repeats 19-21. Ligand binding induces a conformational switch triggering phosphorylation at Ser-2152 by PKA. Polyubiquitination in the CH1 domain by a SCF-like complex containing ASB2 leads to proteasomal degradation. Prior dissociation from actin may be required to expose the target lysines. Ubiquitinated in endothelial cells by RNF213 downstream of the non-canonical Wnt signaling pathway, leading to its degradation by the proteasome. In terms of tissue distribution, widely expressed. Highly expressed in Purkinje cells.

The protein localises to the cytoplasm. It is found in the cell cortex. The protein resides in the cytoskeleton. Its subcellular location is the perikaryon. It localises to the cell projection. The protein localises to the growth cone. It is found in the podosome. Its function is as follows. Actin binding protein that promotes orthogonal branching of actin filaments and links actin filaments to membrane glycoproteins. Anchors various transmembrane proteins to the actin cytoskeleton and serves as a scaffold for a wide range of cytoplasmic signaling proteins. Interaction with FLNB may allow neuroblast migration from the ventricular zone into the cortical plate. Tethers cell surface-localized furin, modulates its rate of internalization and directs its intracellular trafficking. Involved in ciliogenesis. Plays a role in cell-cell contacts and adherens junctions during the development of blood vessels, heart and brain organs. Plays a role in platelets morphology through interaction with SYK that regulates ITAM- and ITAM-like-containing receptor signaling, resulting in by platelet cytoskeleton organization maintenance. During the axon guidance process, required for growth cone collapse induced by SEMA3A-mediated stimulation of neurons. The sequence is that of Filamin-A (Flna) from Mus musculus (Mouse).